The primary structure comprises 129 residues: DNA base-flipping protein (129 aa).

Belongs to the MGMT family. ATL subfamily. In terms of assembly, interacts with HelD and UvrA.

Involved in DNA damage recognition. Binds DNA containing O(6)-methylguanine and larger O(6)-alkylguanine adducts, and to double-stranded DNA that contains an AP (apurinic/apyrimidinic) site. Binds to the damaged base and flips the base out of the DNA duplex into an extrahelical conformation, which allows processing by repair proteins. Works in partnership with the nucleotide excision repair (NER) pathway to enhance the repair of the O(6)-alkylguanine adducts larger than the methyl adduct. Also prevents methyl-directed mismatch repair (MMR)-mediated attack of the O(6)-alkylguanine:T mispairs for the larger alkyl groups. The protein is DNA base-flipping protein of Escherichia coli (strain K12).